An 87-amino-acid polypeptide reads, in one-letter code: NADH dehydrogenase [ubiquinone] 1 alpha subcomplex subunit 4-like 2 (87 aa).

This sequence belongs to the complex I NDUFA4 subunit family.

This is NADH dehydrogenase [ubiquinone] 1 alpha subcomplex subunit 4-like 2 (NDUFA4L2) from Homo sapiens (Human).